The primary structure comprises 190 residues: uncharacterized protein (190 aa).

This is an uncharacterized protein from Homo sapiens (Human).